We begin with the raw amino-acid sequence, 253 residues long: REF/SRPP-like protein OsI_017815 (253 aa).

Residues 1–26 are disordered; it reads MADSGSDAPISNRPEEEVTVEKTPEM. The span at 13–26 shows a compositional bias: basic and acidic residues; sequence RPEEEVTVEKTPEM.

This sequence belongs to the REF/SRPP family.

The chain is REF/SRPP-like protein OsI_017815 from Oryza sativa subsp. indica (Rice).